The primary structure comprises 584 residues: Arginine--tRNA ligase (584 aa).

A 'HIGH' region motif is present at residues 126–136 (PNIAKEMHVGH).

This sequence belongs to the class-I aminoacyl-tRNA synthetase family. In terms of assembly, monomer.

Its subcellular location is the cytoplasm. It carries out the reaction tRNA(Arg) + L-arginine + ATP = L-arginyl-tRNA(Arg) + AMP + diphosphate. The polypeptide is Arginine--tRNA ligase (Synechococcus sp. (strain ATCC 27144 / PCC 6301 / SAUG 1402/1) (Anacystis nidulans)).